A 178-amino-acid polypeptide reads, in one-letter code: MSIEEIPQGADVNVIPKNEKKARELIKKLNLKQIKGISRVTFKQRGNLIYAIDSPDVYRSAAGTYVVFGEAKVDDMNQRIAEAQAQQAQQEALQKAAADAGKTEDKSPEAITADLEKASLGDKKAEDEEEDEGEIDETGLDPKDIEIVVEQTQVSRAKAVKALRNHDGDMVNAIMDLS.

The region spanning 16–80 (PKNEKKAREL…AKVDDMNQRI (65 aa)) is the NAC-A/B domain. The segment covering 82 to 100 (EAQAQQAQQEALQKAAADA) has biased composition (low complexity). Positions 82-145 (EAQAQQAQQE…DETGLDPKDI (64 aa)) are disordered. Residues 101-126 (GKTEDKSPEAITADLEKASLGDKKAE) are compositionally biased toward basic and acidic residues. Positions 127–139 (DEEEDEGEIDETG) are enriched in acidic residues. A UBA domain is found at 140–178 (LDPKDIEIVVEQTQVSRAKAVKALRNHDGDMVNAIMDLS).

This sequence belongs to the NAC-alpha family. In terms of assembly, part of the nascent polypeptide-associated complex (NAC), consisting of EGD2 and EGD1. NAC associates with ribosomes via EGD1.

It is found in the cytoplasm. The protein resides in the nucleus. Functionally, component of the nascent polypeptide-associated complex (NAC), a dynamic component of the ribosomal exit tunnel, protecting the emerging polypeptides from interaction with other cytoplasmic proteins to ensure appropriate nascent protein targeting. The NAC complex also promotes mitochondrial protein import by enhancing productive ribosome interactions with the outer mitochondrial membrane and blocks the inappropriate interaction of ribosomes translating non-secretory nascent polypeptides with translocation sites in the membrane of the endoplasmic reticulum. EGD2 may also be involved in transcription regulation. This chain is Nascent polypeptide-associated complex subunit alpha (EGD2), found in Candida albicans (strain SC5314 / ATCC MYA-2876) (Yeast).